The chain runs to 341 residues: L-threonine 3-dehydrogenase (341 aa).

Residue cysteine 38 coordinates Zn(2+). Active-site charge relay system residues include threonine 40 and histidine 43. Zn(2+) is bound by residues histidine 63, glutamate 64, cysteine 93, cysteine 96, cysteine 99, and cysteine 107. NAD(+) is bound by residues isoleucine 175, aspartate 195, arginine 200, 262 to 264 (LGI), and 286 to 287 (IY).

Belongs to the zinc-containing alcohol dehydrogenase family. Homotetramer. Zn(2+) is required as a cofactor.

The protein resides in the cytoplasm. The enzyme catalyses L-threonine + NAD(+) = (2S)-2-amino-3-oxobutanoate + NADH + H(+). Its pathway is amino-acid degradation; L-threonine degradation via oxydo-reductase pathway; glycine from L-threonine: step 1/2. Functionally, catalyzes the NAD(+)-dependent oxidation of L-threonine to 2-amino-3-ketobutyrate. This is L-threonine 3-dehydrogenase from Salmonella gallinarum (strain 287/91 / NCTC 13346).